Here is a 284-residue protein sequence, read N- to C-terminus: Bifunctional protein FolD (284 aa).

NADP(+) contacts are provided by residues 164 to 166 and Ile-230; that span reads GTS.

Belongs to the tetrahydrofolate dehydrogenase/cyclohydrolase family. In terms of assembly, homodimer.

It carries out the reaction (6R)-5,10-methylene-5,6,7,8-tetrahydrofolate + NADP(+) = (6R)-5,10-methenyltetrahydrofolate + NADPH. It catalyses the reaction (6R)-5,10-methenyltetrahydrofolate + H2O = (6R)-10-formyltetrahydrofolate + H(+). It functions in the pathway one-carbon metabolism; tetrahydrofolate interconversion. Catalyzes the oxidation of 5,10-methylenetetrahydrofolate to 5,10-methenyltetrahydrofolate and then the hydrolysis of 5,10-methenyltetrahydrofolate to 10-formyltetrahydrofolate. The sequence is that of Bifunctional protein FolD from Mycoplasma capricolum subsp. capricolum (strain California kid / ATCC 27343 / NCTC 10154).